The primary structure comprises 252 residues: MSVQRYFIYLAYDGTHYHGWQIQPNGISIQECLMKALATFLRKDTEVIGAGRTDAGVHASLMVAHFDYEGEPLDVDKVAEKLNRLLPQDISVYKVCRVKPDAHARFDATARTYKYYITTVKFPFNRQYRYRIHNPLDFQKMNEAALTLFHYSDFTSFSKLHTDVKTNICKIMHAEWTQEDEYTWVFTIQADRFLRNMVRAIVGTLLEVGRGKLSVDDFRKIIEQQNRCKAGTSAPGNALFLVNVEYPQEIFE.

Residue D54 is the Nucleophile of the active site. Substrate is bound at residue Y113.

The protein belongs to the tRNA pseudouridine synthase TruA family. Homodimer.

The enzyme catalyses uridine(38/39/40) in tRNA = pseudouridine(38/39/40) in tRNA. Formation of pseudouridine at positions 38, 39 and 40 in the anticodon stem and loop of transfer RNAs. The polypeptide is tRNA pseudouridine synthase A (Bacteroides fragilis (strain ATCC 25285 / DSM 2151 / CCUG 4856 / JCM 11019 / LMG 10263 / NCTC 9343 / Onslow / VPI 2553 / EN-2)).